A 1203-amino-acid chain; its full sequence is Protein patched homolog 2 (1203 aa).

The Cytoplasmic segment spans residues methionine 1–lysine 57. A helical transmembrane segment spans residues valine 58 to isoleucine 78. Residues glutamate 79–glutamate 392 lie on the Extracellular side of the membrane. Residue asparagine 370 is glycosylated (N-linked (GlcNAc...) asparagine). The helical transmembrane segment at valine 393 to methionine 413 threads the bilayer. An SSD domain is found at serine 394 to leucine 552. The Cytoplasmic segment spans residues leucine 414–alanine 428. Residues glycine 429–isoleucine 449 form a helical membrane-spanning segment. The Extracellular portion of the chain corresponds to threonine 450–glutamine 457. Residues valine 458–phenylalanine 478 form a helical membrane-spanning segment. Residues threonine 479–serine 501 are Cytoplasmic-facing. The chain crosses the membrane as a helical span at residues valine 502–proline 522. Over alanine 523–alanine 531 the chain is Extracellular. The chain crosses the membrane as a helical span at residues alanine 532–leucine 552. Over aspartate 553 to lysine 686 the chain is Cytoplasmic. Residues alanine 687–valine 707 traverse the membrane as a helical segment. Over glutamine 708–cysteine 963 the chain is Extracellular. A glycan (N-linked (GlcNAc...) asparagine) is linked at asparagine 812. A helical membrane pass occupies residues phenylalanine 964–leucine 984. Over asparagine 985 to leucine 991 the chain is Cytoplasmic. A helical transmembrane segment spans residues isoleucine 992–isoleucine 1012. A topological domain (extracellular) is located at residue lysine 1013. The helical transmembrane segment at leucine 1014–valine 1034 threads the bilayer. At histidine 1035–aspartate 1064 the chain is on the cytoplasmic side. The helical transmembrane segment at glycine 1065–valine 1085 threads the bilayer. Residues arginine 1086 to threonine 1093 are Extracellular-facing. A helical membrane pass occupies residues valine 1094 to leucine 1114. Residues glycine 1115–glycine 1203 are Cytoplasmic-facing. Residues glycine 1171–glycine 1203 are disordered. The segment covering alanine 1186–serine 1195 has biased composition (polar residues).

The protein belongs to the patched family.

The protein localises to the membrane. Its function is as follows. Plays a role in the control of cellular growth. May have a role in epidermal development. May act as a receptor for Sonic hedgehog (SHH). The chain is Protein patched homolog 2 (PTCH2) from Homo sapiens (Human).